The chain runs to 289 residues: Phosphatidylglycerol--prolipoprotein diacylglyceryl transferase (289 aa).

The next 7 helical transmembrane spans lie at 17-37 (LAVR…ILLG), 57-77 (MLFY…IFFY), 89-109 (IFAV…VIAA), 121-141 (WLVV…AGRI), 174-194 (QLYE…IYSA), 200-220 (GAVS…AEFF), and 235-255 (ISMG…MLVW). Arg140 is a binding site for a 1,2-diacyl-sn-glycero-3-phospho-(1'-sn-glycerol).

The protein belongs to the Lgt family.

The protein resides in the cell inner membrane. The catalysed reaction is L-cysteinyl-[prolipoprotein] + a 1,2-diacyl-sn-glycero-3-phospho-(1'-sn-glycerol) = an S-1,2-diacyl-sn-glyceryl-L-cysteinyl-[prolipoprotein] + sn-glycerol 1-phosphate + H(+). The protein operates within protein modification; lipoprotein biosynthesis (diacylglyceryl transfer). Functionally, catalyzes the transfer of the diacylglyceryl group from phosphatidylglycerol to the sulfhydryl group of the N-terminal cysteine of a prolipoprotein, the first step in the formation of mature lipoproteins. The chain is Phosphatidylglycerol--prolipoprotein diacylglyceryl transferase from Nitrosospira multiformis (strain ATCC 25196 / NCIMB 11849 / C 71).